Reading from the N-terminus, the 41-residue chain is Large ribosomal subunit protein bL36B (41 aa).

It belongs to the bacterial ribosomal protein bL36 family.

The polypeptide is Large ribosomal subunit protein bL36B (Neisseria meningitidis serogroup B (strain ATCC BAA-335 / MC58)).